The chain runs to 326 residues: D-alanine--D-alanine ligase (326 aa).

Residues 112–312 (KRIWRFEGLP…YENLCLGILA (201 aa)) enclose the ATP-grasp domain. Residue 138-193 (LQALGAPMIVKPSREGSTIGLTKVWTAEECDQAYVLASRYDPEVLCEEFIEGDETT) participates in ATP binding. Residues aspartate 265, glutamate 279, and asparagine 281 each coordinate Mg(2+).

It belongs to the D-alanine--D-alanine ligase family. Requires Mg(2+) as cofactor. It depends on Mn(2+) as a cofactor.

It localises to the cytoplasm. The enzyme catalyses 2 D-alanine + ATP = D-alanyl-D-alanine + ADP + phosphate + H(+). The protein operates within cell wall biogenesis; peptidoglycan biosynthesis. In terms of biological role, cell wall formation. This chain is D-alanine--D-alanine ligase, found in Delftia acidovorans (strain DSM 14801 / SPH-1).